We begin with the raw amino-acid sequence, 187 residues long: Adenine phosphoribosyltransferase (187 aa).

Belongs to the purine/pyrimidine phosphoribosyltransferase family. In terms of assembly, homodimer.

It is found in the cytoplasm. It carries out the reaction AMP + diphosphate = 5-phospho-alpha-D-ribose 1-diphosphate + adenine. It participates in purine metabolism; AMP biosynthesis via salvage pathway; AMP from adenine: step 1/1. Functionally, catalyzes a salvage reaction resulting in the formation of AMP, that is energically less costly than de novo synthesis. In Burkholderia pseudomallei (strain 1106a), this protein is Adenine phosphoribosyltransferase.